Here is a 103-residue protein sequence, read N- to C-terminus: Small ribosomal subunit protein bS18c (103 aa).

This sequence belongs to the bacterial ribosomal protein bS18 family. In terms of assembly, part of the 30S ribosomal subunit.

It localises to the plastid. The protein localises to the chloroplast. The chain is Small ribosomal subunit protein bS18c (rps18) from Chlorella vulgaris (Green alga).